The sequence spans 92 residues: Subtilisin inhibitor 1 (92 aa).

The span at 1 to 12 (QEQGTNPSQEQN) shows a compositional bias: polar residues. A disordered region spans residues 1-31 (QEQGTNPSQEQNVPLPRNYKQALETNTPTKT).

This sequence belongs to the protease inhibitor I13 (potato type I serine protease inhibitor) family.

In terms of biological role, inhibitor of subtilisin. In Phaseolus angularis (Azuki bean), this protein is Subtilisin inhibitor 1.